Reading from the N-terminus, the 527-residue chain is Acid-sensing ion channel 1 (527 aa).

At 1–49 (MMDLKVDEEEVDSGQPVSIQAFASSSTLHGISHIFSYERLSLKRVVWAL) the chain is on the cytoplasmic side. A helical transmembrane segment spans residues 50 to 71 (CFMGSLALLALVCTNRIQYYFL). The Extracellular segment spans residues 72-424 (YPHVTKLDEV…NYETIEQKKA (353 aa)). 7 disulfide bridges follow: cysteine 94/cysteine 195, cysteine 173/cysteine 180, cysteine 291/cysteine 366, cysteine 309/cysteine 362, cysteine 313/cysteine 360, cysteine 322/cysteine 344, and cysteine 324/cysteine 336. 2 N-linked (GlcNAc...) asparagine glycosylation sites follow: asparagine 367 and asparagine 394. The discontinuously helical transmembrane segment at 425–454 (YEVAGLLGDIGGQMGLFIGASILTVLELFD) threads the bilayer. The GAS motif; ion selectivity filter motif lies at 443–445 (GAS). Residues 455–527 (YAYEVIKHRL…ARGTFEDFTC (73 aa)) are Cytoplasmic-facing.

It belongs to the amiloride-sensitive sodium channel (TC 1.A.6) family. ASIC1 subfamily. Homotrimer. Heterotrimer; with other ASIC proteins producing channel with different properties.

Its subcellular location is the cell membrane. It is found in the postsynaptic cell membrane. The protein localises to the cell projection. It localises to the dendrite. The enzyme catalyses Na(+)(in) = Na(+)(out). It carries out the reaction Li(+)(in) = Li(+)(out). The catalysed reaction is K(+)(in) = K(+)(out). It catalyses the reaction Ca(2+)(in) = Ca(2+)(out). Inhibited by the diuretic drug amiloride. Inhibited by Cs(1+) ions. Inhibited by the spider venom psalmotoxin-1; this locks the channel into its desensitized conformation. Channel activity is increased by the heterodimeric snake venom neurotoxin composed of MitTx-alpha and MitTx-beta; this slows channel closure and increases the magnitude of the steady-state current that is triggered by low pH. Its function is as follows. Forms voltage-independent, pH-gated trimeric sodium channels that act as postsynaptic excitatory receptors in the nervous system, playing a crucial role in regulating synaptic plasticity, learning, and memory. Upon extracellular pH drop this channel elicits transient, fast activating, and completely desensitizing inward currents. Displays high selectivity for sodium ions but can also permit the permeation of other cations. Regulates more or less directly intracellular calcium concentration and CaMKII phosphorylation, and thereby the density of dendritic spines. Modulates neuronal activity in the circuits underlying innate fear. The polypeptide is Acid-sensing ion channel 1 (Gallus gallus (Chicken)).